The chain runs to 622 residues: Leucine-rich repeat-containing protein 70 (622 aa).

Positions 1–31 (MCGLQFSLPCLRLFLVVTCYLLLLLHKEILG) are cleaved as a signal peptide. Residues 32 to 60 (CSSVCQLCTGRQINCRNLGLSSIPKNFPE) form the LRRNT domain. 12 LRR repeats span residues 61 to 82 (STVF…ELTG), 85 to 106 (SLVA…AFVQ), 109 to 130 (HLYF…IFKG), 133 to 154 (NLRN…VFND), 157 to 178 (SVQY…TFVG), 181 to 202 (ALRI…GFQH), 205 to 226 (NLAC…AFEV), 229 to 250 (SLRR…AFKG), 253 to 274 (NLEY…GFSG), 277 to 298 (NLKH…TFSL), 301 to 322 (NLIY…TFEN), and 326 to 347 (SLKI…VLKP). N215 carries N-linked (GlcNAc...) asparagine glycosylation. The N-linked (GlcNAc...) asparagine glycan is linked to N266. N-linked (GlcNAc...) asparagine glycans are attached at residues N331 and N400. Residues 359–406 (NPWECNCKLLGLRDWLASSAITLNIYCQNPPSMRGRALRYINITNCVT) form the LRRCT domain. The chain crosses the membrane as a helical span at residues 527–547 (AFDILLAFFILACVLIIFLIY).

In terms of tissue distribution, expressed at low levels in many tissues, including smooth muscle, brain, uterus, pancreas, cartilage, adipose, spleen and testis.

The protein resides in the membrane. Its function is as follows. Renders cells highly sensitive to the activation by cytokines and lipopolysaccharide (LPS). The polypeptide is Leucine-rich repeat-containing protein 70 (LRRC70) (Homo sapiens (Human)).